Here is a 145-residue protein sequence, read N- to C-terminus: D-aminoacyl-tRNA deacylase (145 aa).

Residues Gly137–Pro138 carry the Gly-cisPro motif, important for rejection of L-amino acids motif.

It belongs to the DTD family. Homodimer.

The protein localises to the cytoplasm. It carries out the reaction glycyl-tRNA(Ala) + H2O = tRNA(Ala) + glycine + H(+). The enzyme catalyses a D-aminoacyl-tRNA + H2O = a tRNA + a D-alpha-amino acid + H(+). In terms of biological role, an aminoacyl-tRNA editing enzyme that deacylates mischarged D-aminoacyl-tRNAs. Also deacylates mischarged glycyl-tRNA(Ala), protecting cells against glycine mischarging by AlaRS. Acts via tRNA-based rather than protein-based catalysis; rejects L-amino acids rather than detecting D-amino acids in the active site. By recycling D-aminoacyl-tRNA to D-amino acids and free tRNA molecules, this enzyme counteracts the toxicity associated with the formation of D-aminoacyl-tRNA entities in vivo and helps enforce protein L-homochirality. The sequence is that of D-aminoacyl-tRNA deacylase from Lactobacillus delbrueckii subsp. bulgaricus (strain ATCC 11842 / DSM 20081 / BCRC 10696 / JCM 1002 / NBRC 13953 / NCIMB 11778 / NCTC 12712 / WDCM 00102 / Lb 14).